A 628-amino-acid polypeptide reads, in one-letter code: Rac GTPase-activating protein 1 (628 aa).

Met1 carries the post-translational modification N-acetylmethionine. Residues 33–110 (QVVKDFEDFR…IQLIRDILMC (78 aa)) adopt a coiled-coil conformation. The interaction with SLC26A8 stretch occupies residues 107–286 (ILMCDTSGSI…GTPQNTGGMR (180 aa)). Position 150 is a phosphoserine; by PLK1 (Ser150). Ser155 is modified (phosphoserine). Ser158 is subject to Phosphoserine; by PLK1. Thr162 bears the Phosphothreonine mark. Phosphoserine; by PLK1 is present on residues Ser165 and Ser171. The segment at 179 to 201 (KKREKRRSNSRQFIDGPPGPVKK) is disordered. 3 positions are modified to phosphoserine: Ser204, Ser207, and Ser215. Residues 242 to 284 (SWTRSRGKSGPLQPVNSDSALNSRPLEPRTDTDNLGTPQNTGG) are disordered. Lys249 participates in a covalent cross-link: Glycyl lysine isopeptide (Lys-Gly) (interchain with G-Cter in SUMO2). At Ser258 the chain carries Phosphoserine. Positions 274-283 (DNLGTPQNTG) are enriched in polar residues. The Phorbol-ester/DAG-type zinc finger occupies 287–336 (LHDFVSKTVIKPESCVPCGKRIKFGKLSLKCRDCRLVSHPECRDRCPLPC). The residue at position 343 (Thr343) is a Phosphothreonine. Residues 350-540 (GMLADFVSQA…RLLSLPLEYW (191 aa)) enclose the Rho-GAP domain. Ser388 is modified (phosphoserine; by AURKB). Lys405 is covalently cross-linked (Glycyl lysine isopeptide (Lys-Gly) (interchain with G-Cter in SUMO2)). Ser411 carries the post-translational modification Phosphoserine; by AURKB. Phosphothreonine is present on residues Thr564, Thr577, Thr585, and Thr602.

As to quaternary structure, heterotetramer of two molecules each of RACGAP1 and KIF23. Found in the centralspindlin complex. Associates with alpha-, beta- and gamma-tubulin and microtubules. Interacts via its Rho-GAP domain with RND2. Associates with AURKB during M phase. Interacts via its Rho-GAP domain and basic region with PRC1. The interaction with PRC1 inhibits its GAP activity towards CDC42 in vitro, which may be required for maintaining normal spindle morphology. Interacts with SLC26A8 via its N-terminus. Interacts with ECT2; the interaction is direct, occurs at anaphase and during cytokinesis in a microtubule-dependent manner, is enhanced by phosphorylation by PLK1 and phosphorylation at Ser-165 plays a major role in mediating binding. Interacts with RAB11FIP3; the interaction occurs at late telophase. Interacts with KIF23; the interaction is direct. In terms of processing, phosphorylated at multiple sites in the midbody during cytokinesis. Phosphorylation by AURKB on Ser-388 at the midbody is, at least in part, responsible for exerting its latent GAP activity towards RhoA. Phosphorylation on multiple serine residues by PLK1 enhances its association with ECT2 and is critical for cleavage furrow formation. Phosphorylation on Ser-165 plays a major role in mediating interaction with ECT2. Phosphorylation on Ser-158 does not appear to contribute to binding to ECT2. As to expression, highly expressed in testis, thymus and spleen and weakly expressed in brain, heart, skeletal muscle and kidney. In testis, expression is restricted to germ cells with the highest levels of expression found in spermatocytes. Not detected in adult liver. Also expressed in fetal liver and in several hematopoietic cell lines.

The protein localises to the nucleus. Its subcellular location is the cytoplasm. It is found in the cytoskeleton. It localises to the spindle. The protein resides in the cytoplasmic vesicle. The protein localises to the secretory vesicle. Its subcellular location is the acrosome. It is found in the cleavage furrow. It localises to the midbody. The protein resides in the midbody ring. The protein localises to the cell membrane. Functionally, component of the centralspindlin complex that serves as a microtubule-dependent and Rho-mediated signaling required for the myosin contractile ring formation during the cell cycle cytokinesis. Required for proper attachment of the midbody to the cell membrane during cytokinesis. Sequentially binds to ECT2 and RAB11FIP3 which regulates cleavage furrow ingression and abscission during cytokinesis. Plays key roles in controlling cell growth and differentiation of hematopoietic cells through mechanisms other than regulating Rac GTPase activity. Has a critical role in erythropoiesis. Also involved in the regulation of growth-related processes in adipocytes and myoblasts. May be involved in regulating spermatogenesis and in the RACGAP1 pathway in neuronal proliferation. Shows strong GAP (GTPase activation) activity towards CDC42 and RAC1 and less towards RHOA. Essential for the early stages of embryogenesis. May play a role in regulating cortical activity through RHOA during cytokinesis. May participate in the regulation of sulfate transport in male germ cells. The chain is Rac GTPase-activating protein 1 from Mus musculus (Mouse).